Reading from the N-terminus, the 425-residue chain is Xylose isomerase (425 aa).

Catalysis depends on residues H101 and D104. Mg(2+) is bound by residues E232, E268, H271, D296, D307, D309, and D339.

Belongs to the xylose isomerase family. In terms of assembly, homotetramer. Mg(2+) is required as a cofactor.

It is found in the cytoplasm. It carries out the reaction alpha-D-xylose = alpha-D-xylulofuranose. The protein is Xylose isomerase of Salmonella paratyphi A (strain ATCC 9150 / SARB42).